Reading from the N-terminus, the 386-residue chain is Phosphoglycerate kinase (386 aa).

Substrate is bound by residues 21–23 (DLN), R36, 59–62 (HLGR), R113, and R146. ATP contacts are provided by residues K197, E313, and 339–342 (GGDT).

This sequence belongs to the phosphoglycerate kinase family. As to quaternary structure, monomer.

The protein resides in the cytoplasm. It carries out the reaction (2R)-3-phosphoglycerate + ATP = (2R)-3-phospho-glyceroyl phosphate + ADP. It functions in the pathway carbohydrate degradation; glycolysis; pyruvate from D-glyceraldehyde 3-phosphate: step 2/5. This is Phosphoglycerate kinase from Serratia proteamaculans (strain 568).